Reading from the N-terminus, the 277-residue chain is Phosphoenolpyruvate synthase regulatory protein (277 aa).

An ADP-binding site is contributed by 157–164 (GVSRCGKT).

This sequence belongs to the pyruvate, phosphate/water dikinase regulatory protein family. PSRP subfamily.

It catalyses the reaction [pyruvate, water dikinase] + ADP = [pyruvate, water dikinase]-phosphate + AMP + H(+). The enzyme catalyses [pyruvate, water dikinase]-phosphate + phosphate + H(+) = [pyruvate, water dikinase] + diphosphate. Its function is as follows. Bifunctional serine/threonine kinase and phosphorylase involved in the regulation of the phosphoenolpyruvate synthase (PEPS) by catalyzing its phosphorylation/dephosphorylation. This Salmonella gallinarum (strain 287/91 / NCTC 13346) protein is Phosphoenolpyruvate synthase regulatory protein.